A 393-amino-acid chain; its full sequence is Protein TsgA homolog (393 aa).

12 consecutive transmembrane segments (helical) span residues Trp11–Met31, Phe51–Pro71, Phe78–Leu98, Ala101–Ile121, Leu134–Tyr154, Trp162–Gly182, Ile206–Ile226, Thr245–Leu265, Ile273–Pro293, Ala297–Leu317, Phe332–Val352, and Leu361–Val381.

This sequence belongs to the major facilitator superfamily. TsgA family.

The protein localises to the cell inner membrane. In Citrobacter koseri (strain ATCC BAA-895 / CDC 4225-83 / SGSC4696), this protein is Protein TsgA homolog.